Reading from the N-terminus, the 58-residue chain is Small ribosomal subunit protein bS21 (58 aa).

The interval aspartate 31–arginine 58 is disordered. Residues tyrosine 45–arginine 58 show a composition bias toward basic residues.

Belongs to the bacterial ribosomal protein bS21 family.

The sequence is that of Small ribosomal subunit protein bS21 from Prochlorococcus marinus (strain MIT 9303).